Reading from the N-terminus, the 1284-residue chain is ABC multidrug transporter atrC (1284 aa).

Over residues 1-11 (MKSTAESKETP) the composition is skewed to basic and acidic residues. The segment at 1-24 (MKSTAESKETPSQDESTTSVPCTE) is disordered. Transmembrane regions (helical) follow at residues 55 to 75 (AVAI…NLIF), 99 to 119 (AAEL…LSYT), 178 to 198 (IGLL…AFVV), 203 to 223 (TLIC…VAAV), 282 to 302 (LLGL…GLAF), and 320 to 340 (IFTV…LAPY). Residues 55-346 (AVAILAACAS…LAPYSIEFSR (292 aa)) enclose the ABC transmembrane type-1 1 domain. Residues 381–626 (VELENVTFSY…DGVYAGLVKI (246 aa)) enclose the ABC transporter 1 domain. N-linked (GlcNAc...) asparagine glycosylation is found at Asn385 and Asn401. 416–423 (GQSGSGKS) is a binding site for ATP. 2 N-linked (GlcNAc...) asparagine glycosylation sites follow: Asn488 and Asn632. A run of 2 helical transmembrane segments spans residues 705 to 725 (LVVL…AILM) and 745 to 765 (FYAS…LAVG). In terms of domain architecture, ABC transmembrane type-1 2 spans 705-992 (LVVLLGCLGG…LFQWSTSITK (288 aa)). An N-linked (GlcNAc...) asparagine glycan is attached at Asn800. The next 4 helical transmembrane spans lie at 824–844 (IALV…AIAF), 846–866 (WKLG…AGMV), 931–951 (MICF…GFWY), and 955–975 (LVSL…SVFF). Residue Asn995 is glycosylated (N-linked (GlcNAc...) asparagine). Residues 1027–1280 (IAMDNVRFSY…GGLYRRMCEA (254 aa)) form the ABC transporter 2 domain. 1062–1069 (GSSGCGKS) is a binding site for ATP. An N-linked (GlcNAc...) asparagine glycan is attached at Asn1122.

This sequence belongs to the ABC transporter superfamily. ABCB family. Multidrug resistance exporter (TC 3.A.1.201) subfamily.

Its subcellular location is the cell membrane. Functionally, pleiotropic ABC efflux transporter involved in the protection of the cells against a wide range of toxic compounds. The polypeptide is ABC multidrug transporter atrC (Emericella nidulans (strain FGSC A4 / ATCC 38163 / CBS 112.46 / NRRL 194 / M139) (Aspergillus nidulans)).